The sequence spans 119 residues: Large ribosomal subunit protein uL14 (119 aa).

It belongs to the universal ribosomal protein uL14 family. As to quaternary structure, part of the 50S ribosomal subunit. Forms a cluster with proteins L3 and L19. In the 70S ribosome, L14 and L19 interact and together make contacts with the 16S rRNA in bridges B5 and B8.

In terms of biological role, binds to 23S rRNA. Forms part of two intersubunit bridges in the 70S ribosome. The chain is Large ribosomal subunit protein uL14 from Neorickettsia sennetsu (strain ATCC VR-367 / Miyayama) (Ehrlichia sennetsu).